Consider the following 432-residue polypeptide: Histidinol dehydrogenase (432 aa).

3 residues coordinate NAD(+): Tyr-133, Gln-194, and Asn-217. Substrate is bound by residues Ser-240, Gln-262, and His-265. Positions 262 and 265 each coordinate Zn(2+). Residues Glu-330 and His-331 each act as proton acceptor in the active site. Residues His-331, Asp-364, Glu-418, and His-423 each contribute to the substrate site. Asp-364 contributes to the Zn(2+) binding site. His-423 lines the Zn(2+) pocket.

The protein belongs to the histidinol dehydrogenase family. Zn(2+) is required as a cofactor.

It carries out the reaction L-histidinol + 2 NAD(+) + H2O = L-histidine + 2 NADH + 3 H(+). The protein operates within amino-acid biosynthesis; L-histidine biosynthesis; L-histidine from 5-phospho-alpha-D-ribose 1-diphosphate: step 9/9. Its function is as follows. Catalyzes the sequential NAD-dependent oxidations of L-histidinol to L-histidinaldehyde and then to L-histidine. The chain is Histidinol dehydrogenase from Nitrosomonas europaea (strain ATCC 19718 / CIP 103999 / KCTC 2705 / NBRC 14298).